Here is a 239-residue protein sequence, read N- to C-terminus: MRIERVDDTTVKLFITYSDIEARGFSREDLWTNRKRGEEFFWSMMDEINEEEDFVVEGPLWIQVHAFEKGVEVTISKSKNEDMMNMSDDDATDQFDEQVQELLAQTLEGEDQLEELFEQRTKEKEAQGSKRQKSSARKNTRTIIVKFNDLEDVINYAYHSNPITTEFEDLLYMVDGTYYYAVYFDSHVDQEVINDSYSQLLEFAYPTDRTEVYLNDYAKIIMSHNVTAQVRRYFPETTE.

The span at 118 to 128 (EQRTKEKEAQG) shows a compositional bias: basic and acidic residues. The tract at residues 118-137 (EQRTKEKEAQGSKRQKSSAR) is disordered.

The protein belongs to the MecA family. Homodimer.

Its function is as follows. Enables the recognition and targeting of unfolded and aggregated proteins to the ClpC protease or to other proteins involved in proteolysis. The sequence is that of Adapter protein MecA from Staphylococcus aureus (strain USA300).